A 379-amino-acid polypeptide reads, in one-letter code: MLASVPAPRPAKKDSAASRRKSASKSTGAAVKDGSSARVSASGAAESPKQSCAQVHGVDFQSLVHATQEETLRAVVSSLPTTGLQATQIGRARQLVQQILHHRSPEDRVFLAYTSNMISCGLRDTFTYLARERLVDCFISSAGGIEEDVIKCGGSTLLGQFGQDGRALRRRGINRIGNLLVPNDNYCWFEDFFTPVLESVQEAQRASRWKTHTAPSEIIEAMGAAIAKNHPDTCTSSLVYWCYRNGISVFSPAFTDGSMGDMIYFYNFSHKGLVVDPLEDVVRLRKLAAKERGRNLAIVLGGGLPKHHLLRNVPMDAVVMVTTGLEADGCVSSGVLADDVACGLLREETETVRVQGDATVVFPLMLIAETAATREGAAA.

Positions 1-48 are disordered; it reads MLASVPAPRPAKKDSAASRRKSASKSTGAAVKDGSSARVSASGAAESP. A compositionally biased stretch (low complexity) spans 36-47; the sequence is SARVSASGAAES. Residues 115-119, 141-143, glutamate 147, and aspartate 256 each bind NAD(+); these read SNMIS and SAG. A spermidine-binding site is contributed by 146 to 147; sequence EE. Spermidine is bound at residue aspartate 261. Position 302 (glycine 302) interacts with NAD(+). Spermidine is bound at residue histidine 307. An NAD(+)-binding site is contributed by 323-324; that stretch reads TG. Residues 329-331 and 338-344 each bind spermidine; these read GCV and DDVACGL. 357 to 358 provides a ligand contact to NAD(+); it reads DA.

It belongs to the deoxyhypusine synthase family.

The sequence is that of Inactive deoxyhypusine synthase from Leishmania donovani.